A 447-amino-acid polypeptide reads, in one-letter code: Chromosomal replication initiator protein DnaA (447 aa).

The domain I, interacts with DnaA modulators stretch occupies residues 1-79; the sequence is MVSCENLWQQ…TGQEITVKLI (79 aa). The segment at 79-105 is domain II; it reads ITDGLEPHSLIGQESSLPMETTPKNAT. Residues 106–322 are domain III, AAA+ region; sequence ALNGKYTFSR…GALIRAIAYT (217 aa). Positions 150, 152, 153, and 154 each coordinate ATP. Residues 323-447 are domain IV, binds dsDNA; sequence SLSNVAMTVE…INIAGQAPES (125 aa).

This sequence belongs to the DnaA family. As to quaternary structure, oligomerizes as a right-handed, spiral filament on DNA at oriC.

Its subcellular location is the cytoplasm. In terms of biological role, plays an essential role in the initiation and regulation of chromosomal replication. ATP-DnaA binds to the origin of replication (oriC) to initiate formation of the DNA replication initiation complex once per cell cycle. Binds the DnaA box (a 9 base pair repeat at the origin) and separates the double-stranded (ds)DNA. Forms a right-handed helical filament on oriC DNA; dsDNA binds to the exterior of the filament while single-stranded (ss)DNA is stabiized in the filament's interior. The ATP-DnaA-oriC complex binds and stabilizes one strand of the AT-rich DNA unwinding element (DUE), permitting loading of DNA polymerase. After initiation quickly degrades to an ADP-DnaA complex that is not apt for DNA replication. Binds acidic phospholipids. Its function is as follows. Isolated domain IV (residues 348-447) binds both E.coli and B.subtilis oriC. The chain is Chromosomal replication initiator protein DnaA from Synechocystis sp. (strain ATCC 27184 / PCC 6803 / Kazusa).